The chain runs to 861 residues: Ribosome biogenesis protein BOP1 homolog (861 aa).

A disordered region spans residues 1-237 (MVANKSKATK…GDTSDEEDIR (237 aa)). A compositionally biased stretch (polar residues) spans 29 to 45 (NGRSTKQPEADSDQSAS). Acidic residues-rich tracts occupy residues 62–77 (DDGD…DASD) and 87–143 (SDSD…EDLA). 3 stretches are compositionally biased toward basic and acidic residues: residues 144 to 156 (EPEK…EGSK), 174 to 190 (ETKK…EKLA), and 212 to 223 (PERKTGRLKNSD). 6 WD repeats span residues 522-561 (GHTD…CIKT), 563-603 (PTGD…CLLS), 692-730 (KSKG…LLKK), 733-772 (PSCK…RPYQ), 776-815 (LHFS…DLMQ), and 831-861 (VNDF…RLYT).

The protein belongs to the WD repeat BOP1/ERB1 family.

The protein localises to the nucleus. It localises to the nucleolus. It is found in the nucleoplasm. Its function is as follows. Required for maturation of ribosomal RNAs and formation of the large ribosomal subunit. The chain is Ribosome biogenesis protein BOP1 homolog from Culex quinquefasciatus (Southern house mosquito).